The primary structure comprises 227 residues: Glutathione S-transferase U18 (227 aa).

A GST N-terminal domain is found at 4-83 (EDVKLIGSWA…YIDEAWNSSG (80 aa)). Residues 14-15 (SV), 40-41 (SK), 54-55 (KM), and 67-68 (ES) contribute to the glutathione site. The GST C-terminal domain occupies 90-221 (HPYDRAIARF…TKLAEFARKL (132 aa)).

Belongs to the GST superfamily. Tau family.

It localises to the cytoplasm. The protein resides in the cytosol. It carries out the reaction RX + glutathione = an S-substituted glutathione + a halide anion + H(+). In terms of biological role, may be involved in the conjugation of reduced glutathione to a wide number of exogenous and endogenous hydrophobic electrophiles and have a detoxification role against certain herbicides. The chain is Glutathione S-transferase U18 (GSTU18) from Arabidopsis thaliana (Mouse-ear cress).